The primary structure comprises 816 residues: Leucine--tRNA ligase (816 aa).

Residues 40–51 (SYPSGSQLHAGH) carry the 'HIGH' region motif. The 'KMSKS' region signature appears at 576–580 (KMSKS). Residue Lys579 participates in ATP binding.

The protein belongs to the class-I aminoacyl-tRNA synthetase family.

Its subcellular location is the cytoplasm. The catalysed reaction is tRNA(Leu) + L-leucine + ATP = L-leucyl-tRNA(Leu) + AMP + diphosphate. The polypeptide is Leucine--tRNA ligase (Clostridium perfringens (strain 13 / Type A)).